A 224-amino-acid polypeptide reads, in one-letter code: Ribonuclease 3 (224 aa).

The RNase III domain occupies 5 to 127; that stretch reads LERLCRRLNY…ILAAIYLDGG (123 aa). Residue Glu-40 coordinates Mg(2+). Asp-44 is a catalytic residue. Residues Asp-113 and Glu-116 each contribute to the Mg(2+) site. Glu-116 is a catalytic residue. In terms of domain architecture, DRBM spans 154 to 224; the sequence is DAKTQLQEFL…AKAMLEQLQG (71 aa).

Belongs to the ribonuclease III family. In terms of assembly, homodimer. The cofactor is Mg(2+).

It localises to the cytoplasm. The enzyme catalyses Endonucleolytic cleavage to 5'-phosphomonoester.. Digests double-stranded RNA. Involved in the processing of primary rRNA transcript to yield the immediate precursors to the large and small rRNAs (23S and 16S). Processes some mRNAs, and tRNAs when they are encoded in the rRNA operon. Processes pre-crRNA and tracrRNA of type II CRISPR loci if present in the organism. This is Ribonuclease 3 from Legionella pneumophila subsp. pneumophila (strain Philadelphia 1 / ATCC 33152 / DSM 7513).